Reading from the N-terminus, the 549-residue chain is Probable protein kinase UbiB (549 aa).

One can recognise a Protein kinase domain in the interval 123–501 (DFDDTPLASA…QQKAHKSNYL (379 aa)). ATP is bound by residues 129 to 137 (LASASISQV) and lysine 152. The active-site Proton acceptor is the aspartate 287. 2 consecutive transmembrane segments (helical) span residues 498–518 (SNYLLITSAILVICGTILLNQ) and 520–540 (ATLWPSYGSIGIGITLWVLGW).

This sequence belongs to the ABC1 family. UbiB subfamily.

The protein resides in the cell inner membrane. It participates in cofactor biosynthesis; ubiquinone biosynthesis [regulation]. Its function is as follows. Is probably a protein kinase regulator of UbiI activity which is involved in aerobic coenzyme Q (ubiquinone) biosynthesis. In Shewanella pealeana (strain ATCC 700345 / ANG-SQ1), this protein is Probable protein kinase UbiB.